A 170-amino-acid chain; its full sequence is uncharacterized protein (170 aa).

The next 3 helical transmembrane spans lie at Pro-6 to Ile-26, Leu-31 to Ile-51, and Ile-91 to Phe-111.

To M.jannaschii MJ1249.1, MJ0210.1 and MJ0785.1.

The protein resides in the cell membrane. This is an uncharacterized protein from Methanocaldococcus jannaschii (strain ATCC 43067 / DSM 2661 / JAL-1 / JCM 10045 / NBRC 100440) (Methanococcus jannaschii).